A 136-amino-acid polypeptide reads, in one-letter code: Glutamyl-tRNA(Gln) amidotransferase subunit C, mitochondrial (136 aa).

A mitochondrion-targeting transit peptide spans 1-27 (MWARAVHLGLRAAARGRRGFTSKADPQ).

Belongs to the GatC family. In terms of assembly, subunit of the heterotrimeric GatCAB amidotransferase (AdT) complex, composed of A (QRSL1), B (GATB) and C (GATC) subunits.

Its subcellular location is the mitochondrion. It catalyses the reaction L-glutamyl-tRNA(Gln) + L-glutamine + ATP + H2O = L-glutaminyl-tRNA(Gln) + L-glutamate + ADP + phosphate + H(+). Its function is as follows. Allows the formation of correctly charged Gln-tRNA(Gln) through the transamidation of misacylated Glu-tRNA(Gln) in the mitochondria. The reaction takes place in the presence of glutamine and ATP through an activated gamma-phospho-Glu-tRNA(Gln). The chain is Glutamyl-tRNA(Gln) amidotransferase subunit C, mitochondrial from Bos taurus (Bovine).